The chain runs to 223 residues: Ribonuclease T (223 aa).

The span at 1-11 (MSDDHFDDEQE) shows a compositional bias: acidic residues. Residues 1 to 21 (MSDDHFDDEQEGSSGGPRHPM) form a disordered region. Residues 31 to 205 (VVVDVETGGF…YDTEKTAELF (175 aa)) form the Exonuclease domain. The Mg(2+) site is built by aspartate 34, glutamate 36, histidine 192, and aspartate 197. The Proton donor/acceptor role is filled by histidine 192.

It belongs to the RNase T family. As to quaternary structure, homodimer. It depends on Mg(2+) as a cofactor.

In terms of biological role, trims short 3' overhangs of a variety of RNA species, leaving a one or two nucleotide 3' overhang. Responsible for the end-turnover of tRNA: specifically removes the terminal AMP residue from uncharged tRNA (tRNA-C-C-A). Also appears to be involved in tRNA biosynthesis. In Pseudomonas fluorescens (strain ATCC BAA-477 / NRRL B-23932 / Pf-5), this protein is Ribonuclease T.